Reading from the N-terminus, the 416-residue chain is Sulfoquinovosyl glycerol-binding protein SmoF (416 aa).

Positions 1-29 are cleaved as a signal peptide; that stretch reads MTLKTIRGKALMGAALCATMLTFSGQAFA. Q40 lines the 3-(6-sulfo-alpha-D-quinovosyl)glycerol pocket. H41 provides a ligand contact to 6-sulfo-D-quinovose. Residues S71, D95, D141, G194, T248, G303, W304, and R373 each contribute to the 3-(6-sulfo-alpha-D-quinovosyl)glycerol site. Positions 303, 304, and 373 each coordinate 6-sulfo-D-quinovose.

The protein belongs to the bacterial solute-binding protein 1 family. The complex is probably composed of two ATP-binding proteins (SmoE), two transmembrane proteins (SmoG and SmoH) and a solute-binding protein (SmoF).

It is found in the periplasm. Functionally, part of the ABC transporter complex SmoEFGH involved in sulfoquinovosyl glycerol (SQGro) uptake. Binds sulfoquinovosyl glycerol (SQGro). Can also bind sulfoquinovose (SQ), methyl alpha-sulfoquinovoside (SQMe) and a short-chain derivative of sulfoquinovosyl diacylglycerol (SQDG). Cannot bind D-glucose and D-glucuronic acid. This Agrobacterium fabrum (strain C58 / ATCC 33970) (Agrobacterium tumefaciens (strain C58)) protein is Sulfoquinovosyl glycerol-binding protein SmoF.